Here is a 347-residue protein sequence, read N- to C-terminus: D-alanine--D-alanine ligase (347 aa).

Positions 131 to 333 (KRVLESAGIA…YPKLIERLVD (203 aa)) constitute an ATP-grasp domain. ATP is bound at residue 161 to 216 (EEKLAYPVFTKPSNMGSSVGISKSENQEELRQALKLAFRYDSRVLVEQGVNAREIE). Mg(2+)-binding residues include D287, E300, and N302.

This sequence belongs to the D-alanine--D-alanine ligase family. The cofactor is Mg(2+). Mn(2+) serves as cofactor.

Its subcellular location is the cytoplasm. It catalyses the reaction 2 D-alanine + ATP = D-alanyl-D-alanine + ADP + phosphate + H(+). The protein operates within cell wall biogenesis; peptidoglycan biosynthesis. In terms of biological role, cell wall formation. The sequence is that of D-alanine--D-alanine ligase from Streptococcus pneumoniae serotype 4 (strain ATCC BAA-334 / TIGR4).